A 253-amino-acid polypeptide reads, in one-letter code: Ubiquinone/menaquinone biosynthesis C-methyltransferase UbiE (253 aa).

S-adenosyl-L-methionine contacts are provided by residues Thr76, Asp97, and 125–126; that span reads DA.

This sequence belongs to the class I-like SAM-binding methyltransferase superfamily. MenG/UbiE family.

It carries out the reaction a 2-demethylmenaquinol + S-adenosyl-L-methionine = a menaquinol + S-adenosyl-L-homocysteine + H(+). The catalysed reaction is a 2-methoxy-6-(all-trans-polyprenyl)benzene-1,4-diol + S-adenosyl-L-methionine = a 5-methoxy-2-methyl-3-(all-trans-polyprenyl)benzene-1,4-diol + S-adenosyl-L-homocysteine + H(+). The protein operates within quinol/quinone metabolism; menaquinone biosynthesis; menaquinol from 1,4-dihydroxy-2-naphthoate: step 2/2. It participates in cofactor biosynthesis; ubiquinone biosynthesis. Its function is as follows. Methyltransferase required for the conversion of demethylmenaquinol (DMKH2) to menaquinol (MKH2) and the conversion of 2-polyprenyl-6-methoxy-1,4-benzoquinol (DDMQH2) to 2-polyprenyl-3-methyl-6-methoxy-1,4-benzoquinol (DMQH2). The protein is Ubiquinone/menaquinone biosynthesis C-methyltransferase UbiE of Azotobacter vinelandii (strain DJ / ATCC BAA-1303).